The primary structure comprises 251 residues: Octanoyltransferase (251 aa).

Positions 56-241 (AETPDEIWIV…NLDGASAAAD (186 aa)) constitute a BPL/LPL catalytic domain. Residues 96–103 (RGGQITYH), 168–170 (ALG), and 181–183 (GLS) contribute to the substrate site. C199 serves as the catalytic Acyl-thioester intermediate.

This sequence belongs to the LipB family.

It localises to the cytoplasm. It carries out the reaction octanoyl-[ACP] + L-lysyl-[protein] = N(6)-octanoyl-L-lysyl-[protein] + holo-[ACP] + H(+). It participates in protein modification; protein lipoylation via endogenous pathway; protein N(6)-(lipoyl)lysine from octanoyl-[acyl-carrier-protein]: step 1/2. Catalyzes the transfer of endogenously produced octanoic acid from octanoyl-acyl-carrier-protein onto the lipoyl domains of lipoate-dependent enzymes. Lipoyl-ACP can also act as a substrate although octanoyl-ACP is likely to be the physiological substrate. In Burkholderia vietnamiensis (strain G4 / LMG 22486) (Burkholderia cepacia (strain R1808)), this protein is Octanoyltransferase.